The chain runs to 259 residues: Phosphate import ATP-binding protein PstB (259 aa).

Residues 5-248 (IEVNDLNVYY…NIIFSNPSAQ (244 aa)) form the ABC transporter domain. Residue 37 to 44 (GPSGCGKS) coordinates ATP.

Belongs to the ABC transporter superfamily. Phosphate importer (TC 3.A.1.7) family. The complex is composed of two ATP-binding proteins (PstB), two transmembrane proteins (PstC and PstA) and a solute-binding protein (PstS).

The protein resides in the cell membrane. It catalyses the reaction phosphate(out) + ATP + H2O = ADP + 2 phosphate(in) + H(+). In terms of biological role, part of the ABC transporter complex PstSACB involved in phosphate import. Responsible for energy coupling to the transport system. In Leifsonia xyli subsp. xyli (strain CTCB07), this protein is Phosphate import ATP-binding protein PstB.